The following is a 368-amino-acid chain: 2-oxoglutarate-dependent dioxygenase frbJ (368 aa).

The Fe2OG dioxygenase domain occupies 171-277; it reads QQHKLKIVKY…RYSIPFFQGV (107 aa). Fe cation contacts are provided by H198, D200, and H256. R268 is a binding site for 2-oxoglutarate.

The protein belongs to the iron/ascorbate-dependent oxidoreductase family.

It functions in the pathway antifungal biosynthesis. Its function is as follows. 2-oxoglutarate-dependent dioxygenase; part of the gene cluster that mediates the biosynthesis of the antifungal antibiotic FR901469, an inhibitor of beta-1,3-glucansynthase, exerting antifungal activity against the pathogenes Candida albicans and Aspergillus fumigatus. FR901469 is a cyclic depsipeptide containing 12 amino acid residues and a fatty acid chain. The NRPS frbI contains 12 modules responsible for the formation of the depsipeptide backbone which is denoted as Acyl-Thr-Ala-Tyr-Val-4OHPro-Thr-Thr-3OHPro-threo3OHGln-Gly-Thr-Orn-OH (C71H116N14O23). The PKS frbB is probably involved in the production of the hydrocarbon chain, and the acyl-CoA ligase frbC might be involved in the transport of the chain to the peptide ptoduct of frbI. Because FR901469 contains 3 hydroxylated amino acid residues, the 3 oxygenases frbA, frbH, and frbJ might be participating in amino acid hydroxylation. As no thioesterase domains were detected in frbI or frbB, the thioesterases frbD and frbE may instead release and cyclize the products of the NRPS and PKS, respectively. The sequence is that of 2-oxoglutarate-dependent dioxygenase frbJ from Dothideomycetidae sp. (strain 11243) (Fungal sp. (strain No.11243)).